A 172-amino-acid chain; its full sequence is Phosphatidylglycerophosphatase A (172 aa).

At 1–31 (MTILPRHKDVAKSRLKMSNPWHLLAVGFGSG) the chain is on the cytoplasmic side. The helical transmembrane segment at 32 to 52 (LSPIVPGTMGSLAAIPFWYLM) threads the bilayer. Residue Thr-53 is a topological domain, periplasmic. Residues 54-74 (FLPWQLYSLVVMLGICIGVYL) traverse the membrane as a helical segment. Topologically, residues 75 to 141 (CHQTAKDMGV…RWFDRNVHGG (67 aa)) are cytoplasmic. A helical transmembrane segment spans residues 142-162 (MGIMIDDIVAGVISAGILYFI). The Periplasmic segment spans residues 163–172 (GHHWPLGILS).

Mg(2+) is required as a cofactor.

The protein resides in the cell inner membrane. The enzyme catalyses a 1,2-diacyl-sn-glycero-3-phospho-(1'-sn-glycero-3'-phosphate) + H2O = a 1,2-diacyl-sn-glycero-3-phospho-(1'-sn-glycerol) + phosphate. Its pathway is phospholipid metabolism; phosphatidylglycerol biosynthesis; phosphatidylglycerol from CDP-diacylglycerol: step 2/2. Lipid phosphatase which dephosphorylates phosphatidylglycerophosphate (PGP) to phosphatidylglycerol (PG). In Escherichia coli (strain K12), this protein is Phosphatidylglycerophosphatase A (pgpA).